The chain runs to 1058 residues: Vacuolar protein sorting-associated protein 54 (1058 aa).

Positions 369–389 (SKKIVEVHERYEQKKKLLAKL) form a coiled coil.

This sequence belongs to the VPS54 family. As to quaternary structure, component of the Golgi-associated retrograde protein (GARP) complex, also called VFT (VPS fifty-three) complex, composed of vps-51, vps-52, vps-53 and vps-54. Within the complex interacts with vps-52 and vps-53.

The protein localises to the golgi apparatus. The protein resides in the trans-Golgi network. In terms of biological role, acts as a component of the GARP complex that is involved in retrograde transport from early and late endosomes to the trans-Golgi network (TGN). The GARP complex facilitates tethering as well as SNARE complex assembly at the Golgi. This Caenorhabditis elegans protein is Vacuolar protein sorting-associated protein 54.